An 84-amino-acid chain; its full sequence is MIGRRSLELKTAPQLLAMQRAGVVLSEALDAALAGAPGFTTAELDAVFAVVLAERGATSNFLGYYDFPASICTSVNEEVVHGIP.

This is an uncharacterized protein from Micrococcus luteus (Micrococcus lysodeikticus).